Reading from the N-terminus, the 203-residue chain is Small ribosomal subunit protein uS4 (203 aa).

The segment at 22–45 (TGKELARRPYKPGQHGPNSRGKVS) is disordered. Residues 93 to 156 (QRLDNVVYRL…QNISTIKEAV (64 aa)) form the S4 RNA-binding domain.

Belongs to the universal ribosomal protein uS4 family. Part of the 30S ribosomal subunit. Contacts protein S5. The interaction surface between S4 and S5 is involved in control of translational fidelity.

One of the primary rRNA binding proteins, it binds directly to 16S rRNA where it nucleates assembly of the body of the 30S subunit. Functionally, with S5 and S12 plays an important role in translational accuracy. This chain is Small ribosomal subunit protein uS4, found in Enterococcus faecalis (strain ATCC 700802 / V583).